Here is a 96-residue protein sequence, read N- to C-terminus: MNIRPLHDRVIIKRMEEERTTAGGIVIPDSATEKPVRGEVIAVGKGKILENGEVRALDVKVGDKVLFGKYSGTEIKVDGQEVLVMREEDIMGVLEG.

Belongs to the GroES chaperonin family. As to quaternary structure, heptamer of 7 subunits arranged in a ring. Interacts with the chaperonin GroEL.

The protein resides in the cytoplasm. Functionally, together with the chaperonin GroEL, plays an essential role in assisting protein folding. The GroEL-GroES system forms a nano-cage that allows encapsulation of the non-native substrate proteins and provides a physical environment optimized to promote and accelerate protein folding. GroES binds to the apical surface of the GroEL ring, thereby capping the opening of the GroEL channel. This Thioalkalivibrio sulfidiphilus (strain HL-EbGR7) protein is Co-chaperonin GroES.